The sequence spans 603 residues: Insulin-like growth factor-binding protein complex acid labile subunit (603 aa).

An N-terminal signal peptide occupies residues 1-23; the sequence is MALRTGGPALVVLLAFWVALGPC. In terms of domain architecture, LRRNT spans 32 to 74; sequence ASADAEGPQCPVACTCSHDDYTDELSVFCSSKNLTHLPDDIPV. Intrachain disulfides connect Cys41/Cys47 and Cys45/Cys60. N-linked (GlcNAc...) asparagine glycans are attached at residues Asn64, Asn85, and Asn96. LRR repeat units follow at residues 75–96, 99–120, 123–144, 147–168, 171–192, 195–216, 219–240, 243–264, 267–288, 291–312, 315–336, 339–360, 363–384, 387–408, 411–432, 435–456, 459–480, 483–504, and 507–528; these read STRA…AFQN, SLDF…ALLG, NLYY…LFTH, SLAS…LFQG, HLWD…VFQG, NLHE…LFCG, ELRE…VFVH, RLQK…AFLG, ALRW…TFPG, GLHV…TFKD, FLEE…TFEG, QLEV…AFSG, NVAV…VFQG, KLHS…TFAG, GLRR…SLAG, ELLE…LFQG, HLEY…VLGP, RAFW…LFSS, and RVRY…PGLE. An N-linked (GlcNAc...) asparagine glycan is attached at Asn368. Asn515 carries an N-linked (GlcNAc...) asparagine glycan. An LRRCT domain is found at 535–603; it reads NPWDCSCPLK…DVSETHFVHC (69 aa). 3 disulfide bridges follow: Cys539/Cys581, Cys541/Cys603, and Cys565/Cys570. Residues Asn578 and Asn586 are each glycosylated (N-linked (GlcNAc...) asparagine).

In terms of assembly, forms a ternary complex with IGF1 and IGFBP3. Brain, kidney, lung, heart, spleen, muscle and liver.

Its subcellular location is the secreted. It localises to the extracellular space. Its function is as follows. May have an important role in regulating the access of circulating IGFs to the tissues. This chain is Insulin-like growth factor-binding protein complex acid labile subunit (Igfals), found in Rattus norvegicus (Rat).